A 396-amino-acid polypeptide reads, in one-letter code: Elongation factor Tu 2 (396 aa).

Residues 10–206 (KPHVNVGTIG…TLDTYIPEPE (197 aa)) form the tr-type G domain. Residues 19-26 (GHVDHGKT) are G1. 19–26 (GHVDHGKT) contributes to the GTP binding site. T26 lines the Mg(2+) pocket. Residues 60–64 (GITIN) are G2. The tract at residues 81 to 84 (DCPG) is G3. GTP contacts are provided by residues 81–85 (DCPGH) and 136–139 (NKCD). The G4 stretch occupies residues 136-139 (NKCD). Residues 174-176 (SAL) form a G5 region.

The protein belongs to the TRAFAC class translation factor GTPase superfamily. Classic translation factor GTPase family. EF-Tu/EF-1A subfamily. As to quaternary structure, monomer.

The protein resides in the cytoplasm. The catalysed reaction is GTP + H2O = GDP + phosphate + H(+). GTP hydrolase that promotes the GTP-dependent binding of aminoacyl-tRNA to the A-site of ribosomes during protein biosynthesis. The sequence is that of Elongation factor Tu 2 from Psychrobacter sp. (strain PRwf-1).